A 257-amino-acid chain; its full sequence is Snake venom serine protease rhinocerase 4 (257 aa).

A signal peptide spans 1–17 (VLIRVLANLLVLQLSYA). Residues 18-23 (QKSSEL) constitute a propeptide that is removed on maturation. The Peptidase S1 domain maps to 24–248 (VIGGAECNIN…YTDWIRSIIG (225 aa)). 6 cysteine pairs are disulfide-bonded: C30–C162, C49–C65, C97–C255, C141–C209, C173–C188, and C199–C224. N43 is a glycosylation site (N-linked (GlcNAc...) asparagine). The active-site Charge relay system is the H64. 2 N-linked (GlcNAc...) asparagine glycosylation sites follow: N78 and N100. D109 serves as the catalytic Charge relay system. S203 (charge relay system) is an active-site residue. N-linked (GlcNAc...) asparagine glycosylation occurs at N250.

This sequence belongs to the peptidase S1 family. Snake venom subfamily. In terms of tissue distribution, expressed by the venom gland.

Its subcellular location is the secreted. Snake venom serine protease that may act in the hemostasis system of the prey. The protein is Snake venom serine protease rhinocerase 4 of Bitis rhinoceros (West African gaboon viper).